The primary structure comprises 925 residues: Aspulvinone E synthetase melA (925 aa).

The segment at 11–434 (ETAAARNGDG…GGRAKETIII (424 aa)) is adenylation (A) domain. In terms of domain architecture, Carrier spans 564 to 644 (SPKNDFEKGL…ELAAALDNLY (81 aa)). Residue serine 601 is modified to O-(pantetheine 4'-phosphoryl)serine. A thioesterase (TE) domain region spans residues 663 to 923 (PLWLVHPGAG…KILRSALAER (261 aa)).

Belongs to the ATP-dependent AMP-binding enzyme family.

It is found in the cytoplasm. Functionally, nonribosomal peptide synthase; part of the gene cluster that mediates the biosynthesis of Asp-melanin, a pigment that confers resistance against UV light and hampers phagocytosis by soil amoeba. The nonribosomal peptide synthase melA converts 4-hydroxyphenylpyruvate (4-HPPA) to aspulvinone E. The tyrosinase tyrP then performs hydroxylations of both aromatic moieties of aspulvinone E. The product of tyrP is highly unstable, and, due to the high reactivity of methides and ortho-diquinones, the polymeric Asp-melanin forms spontaneously. The chain is Aspulvinone E synthetase melA from Aspergillus terreus.